Here is a 163-residue protein sequence, read N- to C-terminus: Oocyte-secreted protein 1 (163 aa).

The signal sequence occupies residues 1–21 (MKPSSGLRGLLVLFSLTWTCA).

This sequence belongs to the PLAC1 family. In terms of tissue distribution, oocyte-specific.

The protein resides in the secreted. May be involved in cell differentiation. This chain is Oocyte-secreted protein 1 (OOSP1), found in Bos taurus (Bovine).